The chain runs to 247 residues: Synaptonemal complex central element protein 1-like (247 aa).

Residues 71–196 (SEELGEAQAL…LQEARETWDS (126 aa)) adopt a coiled-coil conformation. Residues 189-247 (EARETWDSPGNCGLKTELEELEGQSQRSPEAQNDKGEASQEEQHHLETSEELPRTGTLC) form a disordered region. The span at 220–241 (QNDKGEASQEEQHHLETSEELP) shows a compositional bias: basic and acidic residues.

The protein belongs to the SYCE family. As to expression, isoform 1 is abundantly expressed in testis and weakly in ovary, it is not found in other tissues. Isoform 2 is expressed in testis and poorly in brain, heart, lung and other examined tissues.

Its function is as follows. May be involved in meiosis. Isoform 1 may be involved in meiosis during spermatogenesis while isoform 2 is probably related to a later stage of meiosis, in the development stage of secondary spermatocytes and spermatids. In Mus musculus (Mouse), this protein is Synaptonemal complex central element protein 1-like (Syce1l).